Reading from the N-terminus, the 364-residue chain is Dual-specificity RNA methyltransferase RlmN (364 aa).

Residue Glu-91 is the Proton acceptor of the active site. Residues 97 to 333 (EDDRGTLCIS…TTTRKTRGDD (237 aa)) form the Radical SAM core domain. Cys-104 and Cys-338 form a disulfide bridge. The [4Fe-4S] cluster site is built by Cys-111, Cys-115, and Cys-118. Residues 164-165 (GE), Ser-196, 218-220 (SLH), and Asn-295 each bind S-adenosyl-L-methionine. Cys-338 serves as the catalytic S-methylcysteine intermediate.

Belongs to the radical SAM superfamily. RlmN family. [4Fe-4S] cluster serves as cofactor.

The protein resides in the cytoplasm. The enzyme catalyses adenosine(2503) in 23S rRNA + 2 reduced [2Fe-2S]-[ferredoxin] + 2 S-adenosyl-L-methionine = 2-methyladenosine(2503) in 23S rRNA + 5'-deoxyadenosine + L-methionine + 2 oxidized [2Fe-2S]-[ferredoxin] + S-adenosyl-L-homocysteine. The catalysed reaction is adenosine(37) in tRNA + 2 reduced [2Fe-2S]-[ferredoxin] + 2 S-adenosyl-L-methionine = 2-methyladenosine(37) in tRNA + 5'-deoxyadenosine + L-methionine + 2 oxidized [2Fe-2S]-[ferredoxin] + S-adenosyl-L-homocysteine. Functionally, specifically methylates position 2 of adenine 2503 in 23S rRNA and position 2 of adenine 37 in tRNAs. m2A2503 modification seems to play a crucial role in the proofreading step occurring at the peptidyl transferase center and thus would serve to optimize ribosomal fidelity. The protein is Dual-specificity RNA methyltransferase RlmN of Dechloromonas aromatica (strain RCB).